Consider the following 530-residue polypeptide: Bifunctional purine biosynthesis protein PurH (530 aa).

Residues Met-1–Val-148 enclose the MGS-like domain.

Belongs to the PurH family.

The catalysed reaction is (6R)-10-formyltetrahydrofolate + 5-amino-1-(5-phospho-beta-D-ribosyl)imidazole-4-carboxamide = 5-formamido-1-(5-phospho-D-ribosyl)imidazole-4-carboxamide + (6S)-5,6,7,8-tetrahydrofolate. It catalyses the reaction IMP + H2O = 5-formamido-1-(5-phospho-D-ribosyl)imidazole-4-carboxamide. It functions in the pathway purine metabolism; IMP biosynthesis via de novo pathway; 5-formamido-1-(5-phospho-D-ribosyl)imidazole-4-carboxamide from 5-amino-1-(5-phospho-D-ribosyl)imidazole-4-carboxamide (10-formyl THF route): step 1/1. The protein operates within purine metabolism; IMP biosynthesis via de novo pathway; IMP from 5-formamido-1-(5-phospho-D-ribosyl)imidazole-4-carboxamide: step 1/1. This chain is Bifunctional purine biosynthesis protein PurH, found in Aeromonas hydrophila subsp. hydrophila (strain ATCC 7966 / DSM 30187 / BCRC 13018 / CCUG 14551 / JCM 1027 / KCTC 2358 / NCIMB 9240 / NCTC 8049).